Here is a 1479-residue protein sequence, read N- to C-terminus: WASH complex subunit 2 (1479 aa).

The span at 1–17 (MPEEQPQQQQQPVREQP) shows a compositional bias: low complexity. Disordered stretches follow at residues 1–25 (MPEE…DVPW), 188–210 (GGLV…TEKK), 240–564 (FIED…GGVK), 576–1383 (FSGK…FDDI), and 1419–1479 (TSTT…NLFD). Acidic residues predominate over residues 242-279 (EDSDSDSSDEEDEEDVDAEDGSDESSSESSSDDDDEKD). Over residues 334 to 349 (SKKSSNSYTSSLSDIL) the composition is skewed to low complexity. The segment covering 422–431 (DDDLFGDSEE) has biased composition (acidic residues). Composition is skewed to low complexity over residues 465–475 (TTTSSQPQQKK) and 514–532 (TPKP…TTTK). Thr535 is modified (phosphothreonine). Positions 542 to 552 (ASGSESTTGKS) are enriched in polar residues. The segment covering 595-620 (TESKASEDDFFSSDKKSTSATKKDAE) has biased composition (basic and acidic residues). Residues 709-723 (PKAPTTATTTTTTKP) show a composition bias toward low complexity. Residues 765 to 781 (TETKKQPITEEPKKKQD) show a composition bias toward basic and acidic residues. Residues 802–814 (ASISPASPVSTIE) show a composition bias toward polar residues. Positions 839-885 (DLTKDEPAKSEPTKVEPTKVEPTKAEPTKVEPAKVEPTKVESDKKES) are enriched in basic and acidic residues. The span at 904–916 (KNPTTSSSTTATE) shows a compositional bias: polar residues. Over residues 951–968 (SSTTKKSTTTTTTTTSSK) the composition is skewed to low complexity. The span at 981-990 (KKVEEKKSSD) shows a compositional bias: basic and acidic residues. Low complexity-rich tracts occupy residues 991-1000 (FDSFFSGSDD) and 1010-1021 (KTTTTPPLTSTT). Polar residues predominate over residues 1062 to 1075 (PLTSNNTKNRTKSI). A compositionally biased stretch (basic and acidic residues) spans 1091-1107 (EKNRSESPTSEKAEPTK). Residues 1108 to 1123 (KTSNISSLQNKLSLNP) show a composition bias toward polar residues. The span at 1147-1162 (STNNDNDSSATDLSDS) shows a compositional bias: low complexity. Composition is skewed to polar residues over residues 1163–1174 (GRSSPSVTSPTL) and 1220–1236 (KSGT…TPTQ). At Ser1249 the chain carries Phosphoserine. Over residues 1277–1292 (EKTSSGKSSPSPTIKS) the composition is skewed to low complexity. A compositionally biased stretch (polar residues) spans 1307-1317 (ASTTTKPTASE). Residues 1327-1358 (KKSEPETPKETPKETPKEKEQTKEKEQPKETP) are compositionally biased toward basic and acidic residues. Composition is skewed to low complexity over residues 1419–1445 (TSTT…AVDN) and 1452–1466 (NTTT…TPSK).

The protein belongs to the FAM21 family. In terms of assembly, probable component of the WASH complex.

This Dictyostelium discoideum (Social amoeba) protein is WASH complex subunit 2.